Here is a 417-residue protein sequence, read N- to C-terminus: Serine--tRNA ligase (417 aa).

226–228 (TSE) contributes to the L-serine binding site. Residues 257–259 (RRE) and valine 273 each bind ATP. Glutamate 280 is a binding site for L-serine. 344-347 (ELTS) provides a ligand contact to ATP. Threonine 379 serves as a coordination point for L-serine.

Belongs to the class-II aminoacyl-tRNA synthetase family. Type-1 seryl-tRNA synthetase subfamily. As to quaternary structure, homodimer. The tRNA molecule binds across the dimer.

It is found in the cytoplasm. It catalyses the reaction tRNA(Ser) + L-serine + ATP = L-seryl-tRNA(Ser) + AMP + diphosphate + H(+). The enzyme catalyses tRNA(Sec) + L-serine + ATP = L-seryl-tRNA(Sec) + AMP + diphosphate + H(+). The protein operates within aminoacyl-tRNA biosynthesis; selenocysteinyl-tRNA(Sec) biosynthesis; L-seryl-tRNA(Sec) from L-serine and tRNA(Sec): step 1/1. Functionally, catalyzes the attachment of serine to tRNA(Ser). Is also able to aminoacylate tRNA(Sec) with serine, to form the misacylated tRNA L-seryl-tRNA(Sec), which will be further converted into selenocysteinyl-tRNA(Sec). The protein is Serine--tRNA ligase of Mycolicibacterium smegmatis (strain ATCC 700084 / mc(2)155) (Mycobacterium smegmatis).